We begin with the raw amino-acid sequence, 381 residues long: tRNA pseudouridine synthase D (381 aa).

Asp-81 (nucleophile) is an active-site residue. Residues Gly-160 to Val-335 enclose the TRUD domain.

This sequence belongs to the pseudouridine synthase TruD family.

The enzyme catalyses uridine(13) in tRNA = pseudouridine(13) in tRNA. In terms of biological role, responsible for synthesis of pseudouridine from uracil-13 in transfer RNAs. This Helicobacter pylori (strain HPAG1) protein is tRNA pseudouridine synthase D.